Reading from the N-terminus, the 528-residue chain is Keratin, type II cytoskeletal 78 (528 aa).

Positions 1-104 (MSLSPCRARR…DPQFQVVRTQ (104 aa)) are head. Residues 23-45 (VGRGRTGFSSRSLSSFGGCRGGS) are disordered. Residues 24-39 (GRGRTGFSSRSLSSFG) are compositionally biased toward low complexity. The coil 1A stretch occupies residues 105 to 140 (ETQQIRVLNNQFASFIDKVRFLEQQNKVLETKWHLL). Residues 105–418 (ETQQIRVLNN…RLLEGEECRM (314 aa)) enclose the IF rod domain. The interval 141–159 (QQQGLSDRPQGLESFFEAY) is linker 1. Residues 160–252 (LVRLRTQLEE…LYEEELGQLQ (93 aa)) form a coil 1B region. The tract at residues 253–275 (TQASDMSVVLSMDNNRCLDFRDL) is linker 12. The coil 2 stretch occupies residues 276–415 (IAEVRARYEE…TYRRLLEGEE (140 aa)). Positions 416–528 (CRMSGECASQ…ESSLKTSVTY (113 aa)) are tail.

This sequence belongs to the intermediate filament family. In terms of assembly, heterotetramer of two type I and two type II keratins.

This is Keratin, type II cytoskeletal 78 (KRT78) from Bos taurus (Bovine).